The primary structure comprises 769 residues: Serine protease HtrA-like (769 aa).

Positions 1–20 (MDIGKKHVIPKSQYRRKRRE) are enriched in basic residues. The tract at residues 1–388 (MDIGKKHVIP…KKATSKLNKG (388 aa)) is disordered. Basic and acidic residues-rich tracts occupy residues 21–64 (FFHN…ERFK), 71–87 (LEQR…EESK), and 96–108 (YNKD…DVSK). The span at 126-139 (YEQNTEATLSTNST) shows a compositional bias: polar residues. Basic and acidic residues predominate over residues 140–186 (DKVESTDMRKLSSDKNKVGHEEQHVLSKPSEHDKETRIDFESSRTDS). A compositionally biased stretch (polar residues) spans 247–262 (QQSQNEQTKTYTYGDS). Basic and acidic residues-rich tracts occupy residues 264 to 296 (QNDK…HIVD) and 310 to 330 (KIDD…HKQN). Residues 331–347 (ADSSETVGYQSQSSASH) are compositionally biased toward polar residues. Positions 348–364 (RSTEKRNMAINDHDKLN) are enriched in basic and acidic residues. The segment covering 366–388 (QKPNTKTSANNNQKKATSKLNKG) has biased composition (polar residues). A helical membrane pass occupies residues 410-430 (LVILMGIIILIVILNAIFNNV). Active-site charge relay system residues include H504, D534, and S619. The 54-residue stretch at 680–733 (IASLNSFERQAVKLLGKVKNGVVVDQVDNNGLADQSGLKKGDVITELDGKLLED) folds into the PDZ domain.

The protein belongs to the peptidase S1C family.

Its subcellular location is the cell membrane. In Staphylococcus aureus (strain MRSA252), this protein is Serine protease HtrA-like.